We begin with the raw amino-acid sequence, 81 residues long: MKLVLAIVLILMFLSLSAGAETSDNGVSRGGHRPQYWPVTPPSIVCLRSGEDCENNTPCCPGLSCRVSADLATLKLSLACD.

The N-terminal stretch at 1 to 19 (MKLVLAIVLILMFLSLSAG) is a signal peptide. The propeptide occupies 20–42 (AETSDNGVSRGGHRPQYWPVTPP). Disulfide bonds link C46-C60, C53-C65, and C59-C80.

Belongs to the conotoxin I3 superfamily. As to expression, expressed by the venom duct.

The protein localises to the secreted. The chain is Conotoxin Lt6.4 from Conus litteratus (Lettered cone).